Reading from the N-terminus, the 482-residue chain is Thymidine phosphorylase (482 aa).

Residues 1–10 (MAALMTPGTG) constitute a propeptide that is removed on maturation. Residues 1–36 (MAALMTPGTGAPPAPGDFSGEGSQGLPDPSPEPKQL) are disordered. Phosphothreonine is present on Thr6. Residues His116, Arg202, Ser217, and Lys221 each coordinate substrate. R-V-A-A-A-L-X(5,6)-L-G-R repeat units lie at residues 265–279 (RVAAALTAMDKPLGR) and 329–342 (RVAAALDDGSALGR). R-A-L-X-X-A-L-V-L repeat units follow at residues 393–401 (RALPLALVL) and 453–461 (RALQEALVL).

The protein belongs to the thymidine/pyrimidine-nucleoside phosphorylase family. Homodimer.

It catalyses the reaction thymidine + phosphate = 2-deoxy-alpha-D-ribose 1-phosphate + thymine. The protein operates within pyrimidine metabolism; dTMP biosynthesis via salvage pathway; dTMP from thymine: step 1/2. In terms of biological role, may have a role in maintaining the integrity of the blood vessels. Has growth promoting activity on endothelial cells, angiogenic activity in vivo and chemotactic activity on endothelial cells in vitro. Functionally, catalyzes the reversible phosphorolysis of thymidine. The produced molecules are then utilized as carbon and energy sources or in the rescue of pyrimidine bases for nucleotide synthesis. The polypeptide is Thymidine phosphorylase (Homo sapiens (Human)).